Here is a 55-residue protein sequence, read N- to C-terminus: Large ribosomal subunit protein bL33 (55 aa).

The protein belongs to the bacterial ribosomal protein bL33 family.

This Rhizorhabdus wittichii (strain DSM 6014 / CCUG 31198 / JCM 15750 / NBRC 105917 / EY 4224 / RW1) (Sphingomonas wittichii) protein is Large ribosomal subunit protein bL33.